Reading from the N-terminus, the 208-residue chain is Cell death-inducing p53-target protein 1 (208 aa).

Pro residues-rich tracts occupy residues 1–13 and 36–67; these read MSSE…PGGP and MQPP…PGFI. The segment at 1–71 is disordered; it reads MSSEPPPPYP…PQPGFIPPHM (71 aa). One can recognise an LITAF domain in the interval 122-206; the sequence is ATTVTVLQGE…CKAYIYTYKR (85 aa). Residues Cys142 and Cys145 each contribute to the Zn(2+) site. The segment at 164–184 is membrane-binding amphipathic helix; the sequence is LGFFCCFMGCDLGCCLIPCLI. Zn(2+) is bound by residues Cys194 and Cys197.

Belongs to the CDIP1/LITAF family. In terms of tissue distribution, highly expressed in brain. Expressed at lower level in heart, skeletal muscle, kidney, pancreas and liver. Weakly or not expressed in placenta and lung.

The protein localises to the late endosome membrane. It localises to the lysosome membrane. Its function is as follows. Acts as an important p53/TP53-apoptotic effector. Regulates TNF-alpha-mediated apoptosis in a p53/TP53-dependent manner. The polypeptide is Cell death-inducing p53-target protein 1 (CDIP1) (Homo sapiens (Human)).